A 585-amino-acid polypeptide reads, in one-letter code: MKPSKSHHKEKTARRREEKLEESDNPKYRDRAKERRENQNPDYDPSELSSFHAVAPPGAVDIRAADALKISIENSKYLGGDVEHTHLVKGLDYALLNKVRSEIVKKPDGEDGDGGKTSAPKEDQRVTFRTIAAKSVYQWIVKPQTIIKSNEMFLPGRMTFVYDMEGGYTHDIPTTLYRSKADCPVPEEFVTVNVDGSVLDRIAKIMSYLRLGSSGKVLKKKKKEKDGKGKMSTIANDYDEDDNKSKIENGSSVNISDREVLPPPPPLPPGINHLDLSTKQEEPPVARTDDDDIFVGEGVDYTVPGKDVTQSPISEDMEESPRDKEKVSYFDEPAYGPVQEKVPYFAEPAYGPVQPSAGQEWQDMSAYGAMQTQGLAPGYPGEWQEYQYAEQTGYQEQYLQPGMEGYEVQPETDVLLDPQLMSQEEKDRGLGSVFKRDDQRLQQLRESDAREKDPTFVSESYSECYPGYQEYNHEIVGSDEEPDLSKMDMGGKAKGGLHRWDFETEEEWEKYNEQKEAMPKAAFQFGVKMQDGRKTRKQNRDRDQKLNNELHQINKILTRKKMEKEGGDVASLDAAEAQTPKRSKH.

Positions 1-14 (MKPSKSHHKEKTAR) are enriched in basic residues. Disordered stretches follow at residues 1–52 (MKPS…SSFH) and 219–324 (KKKK…PRDK). A compositionally biased stretch (basic and acidic residues) spans 15–39 (RREEKLEESDNPKYRDRAKERRENQ). 4 R-[ED] repeats span residues 16-17 (RE), 29-30 (RD), 36-37 (RE), and 258-259 (RE). Positions 276 to 288 (LSTKQEEPPVART) are enriched in basic and acidic residues. R-[ED] repeat units follow at residues 322 to 323 (RD), 436 to 437 (RD), 445 to 446 (RE), 450 to 451 (RE), 540 to 541 (RD), and 542 to 543 (RD). The segment at 523 to 585 (FQFGVKMQDG…EAQTPKRSKH (63 aa)) is disordered. The segment covering 530–548 (QDGRKTRKQNRDRDQKLNN) has biased composition (basic and acidic residues). Phosphothreonine is present on threonine 579.

It belongs to the RED family. As to quaternary structure, component of the spliceosome. Interacts with SMU1. In terms of tissue distribution, highly expressed in seedlings at 7 days after germination, young flowers before anthesis and developing siliques. Expressed at lower levels in roots, expanding leaves, open flowers, dry seeds and inflorescences. Not detected in senescing leaves.

The protein localises to the nucleus. Functionally, auxiliary spliceosomal protein involved in splicing of specific pre-mRNAs that affect multiple aspects of development. The polypeptide is Suppressor of mec-8 and unc-52 protein homolog 2 (SMU2) (Arabidopsis thaliana (Mouse-ear cress)).